The primary structure comprises 98 residues: Hainantoxin-XVII.2 (98 aa).

Positions 1-40 (MTTVGVSLFRRSPEKITMKIAAFLGLSFLLIASYVLICEA) are cleaved as a signal peptide. The propeptide occupies 41 to 64 (QHPGFQELLILEENMRDPENSKER). 3 cysteine pairs are disulfide-bonded: cysteine 66–cysteine 81, cysteine 73–cysteine 85, and cysteine 80–cysteine 95.

This sequence belongs to the hainantoxin family. 17 subfamily. Expressed by the venom gland.

Its subcellular location is the secreted. In terms of biological role, putative ion channel inhibitor. In Cyriopagopus hainanus (Chinese bird spider), this protein is Hainantoxin-XVII.2.